The following is a 309-amino-acid chain: Peptidyl-prolyl cis-trans isomerase 9 (309 aa).

In terms of domain architecture, PPIase cyclophilin-type spans 8-173 (FLDISVDENL…AKVLISNCGE (166 aa)). Composition is skewed to basic and acidic residues over residues 217–229 (NEKK…DKRR), 239–265 (RSHE…RDEN), 280–289 (ERSATPEHWR), and 296–309 (WVHD…EDLV). A disordered region spans residues 217–309 (NEKKHEMRND…SHKHPEEDLV (93 aa)).

Belongs to the cyclophilin-type PPIase family. As to expression, co-expressed with pdi-1 in the syncytial hypodermis.

It catalyses the reaction [protein]-peptidylproline (omega=180) = [protein]-peptidylproline (omega=0). In terms of biological role, PPIases accelerate the folding of proteins. It catalyzes the cis-trans isomerization of proline imidic peptide bonds in oligopeptides. Thought to function as a catalyst in the folding and modification of cuticle collagens. The chain is Peptidyl-prolyl cis-trans isomerase 9 (cyn-9) from Caenorhabditis elegans.